A 471-amino-acid polypeptide reads, in one-letter code: Argininosuccinate lyase (471 aa).

This sequence belongs to the lyase 1 family. Argininosuccinate lyase subfamily.

It is found in the cytoplasm. The enzyme catalyses 2-(N(omega)-L-arginino)succinate = fumarate + L-arginine. The protein operates within amino-acid biosynthesis; L-arginine biosynthesis; L-arginine from L-ornithine and carbamoyl phosphate: step 3/3. This Cereibacter sphaeroides (strain ATCC 17023 / DSM 158 / JCM 6121 / CCUG 31486 / LMG 2827 / NBRC 12203 / NCIMB 8253 / ATH 2.4.1.) (Rhodobacter sphaeroides) protein is Argininosuccinate lyase.